The primary structure comprises 136 residues: Large-conductance mechanosensitive channel (136 aa).

Helical transmembrane passes span 10-30 and 76-96; these read FAMR…AAFG and GVFI…FMAI.

It belongs to the MscL family. As to quaternary structure, homopentamer.

It localises to the cell inner membrane. Channel that opens in response to stretch forces in the membrane lipid bilayer. May participate in the regulation of osmotic pressure changes within the cell. In Escherichia coli O127:H6 (strain E2348/69 / EPEC), this protein is Large-conductance mechanosensitive channel.